A 186-amino-acid polypeptide reads, in one-letter code: Sec-independent protein translocase protein TatB (186 aa).

The helical transmembrane segment at 1–21 (MFDIGFSELILLMVLGLVVLG) threads the bilayer. The disordered stretch occupies residues 162-186 (LSSYYPPDDIEIAPASKSQSSKTKS). The segment covering 177–186 (SKSQSSKTKS) has biased composition (polar residues).

This sequence belongs to the TatB family. As to quaternary structure, the Tat system comprises two distinct complexes: a TatABC complex, containing multiple copies of TatA, TatB and TatC subunits, and a separate TatA complex, containing only TatA subunits. Substrates initially bind to the TatABC complex, which probably triggers association of the separate TatA complex to form the active translocon.

The protein resides in the cell inner membrane. Functionally, part of the twin-arginine translocation (Tat) system that transports large folded proteins containing a characteristic twin-arginine motif in their signal peptide across membranes. Together with TatC, TatB is part of a receptor directly interacting with Tat signal peptides. TatB may form an oligomeric binding site that transiently accommodates folded Tat precursor proteins before their translocation. In Haemophilus influenzae (strain 86-028NP), this protein is Sec-independent protein translocase protein TatB.